A 643-amino-acid chain; its full sequence is Rhophilin-1 (643 aa).

The tract at residues 1 to 43 (MILEERPDGQGTGEESSRPQDDGSIRKGYGSFVQNQPGQLQSH) is disordered. Residues 15 to 25 (ESSRPQDDGSI) are compositionally biased toward basic and acidic residues. The 75-residue stretch at 30 to 104 (GSFVQNQPGQ…LAELSTSVDV (75 aa)) folds into the REM-1 domain. Serine 31 carries the phosphoserine modification. A compositionally biased stretch (polar residues) spans 32–42 (FVQNQPGQLQS). The region spanning 115–462 (PMIPLGLKET…LAKYSQLERE (348 aa)) is the BRO1 domain. A PDZ domain is found at 500–577 (PVHMTRGEGS…EGVSLQVVSL (78 aa)).

Belongs to the RHPN family. Binds specifically to GTP-Rho. Interacts with ROPN1. Highly expressed in testis.

Its function is as follows. Has no enzymatic activity. May serve as a target for Rho, and interact with some cytoskeletal component upon Rho binding or relay a Rho signal to other molecules. This Mus musculus (Mouse) protein is Rhophilin-1 (Rhpn1).